A 230-amino-acid polypeptide reads, in one-letter code: UPF0173 metal-dependent hydrolase SPO2976 (230 aa).

This sequence belongs to the UPF0173 family.

The polypeptide is UPF0173 metal-dependent hydrolase SPO2976 (Ruegeria pomeroyi (strain ATCC 700808 / DSM 15171 / DSS-3) (Silicibacter pomeroyi)).